A 238-amino-acid polypeptide reads, in one-letter code: Adenylate dimethylallyltransferase (238 aa).

This sequence belongs to the isopentenyl transferase family.

It catalyses the reaction dimethylallyl diphosphate + AMP = N(6)-(dimethylallyl)adenosine 5'-phosphate + diphosphate. Transfers dimethylallyl groups to AMP as part of the biosynthesis of cytokinin phytohormones. This chain is Adenylate dimethylallyltransferase (tzs), found in Ralstonia nicotianae (strain ATCC BAA-1114 / GMI1000) (Ralstonia solanacearum).